Here is a 335-residue protein sequence, read N- to C-terminus: Arylacetonitrilase (335 aa).

The region spanning 6 to 291 (LKVAITQAQP…EGIVYADLDM (286 aa)) is the CN hydrolase domain. Catalysis depends on E46, which acts as the Proton acceptor. Residue K127 is part of the active site. Catalysis depends on C168, which acts as the Nucleophile.

The protein belongs to the carbon-nitrogen hydrolase superfamily. Nitrilase family.

It catalyses the reaction a nitrile + 2 H2O = a carboxylate + NH4(+). The enzyme catalyses 4-chlorophenylacetonitrile + 2 H2O = 4-chlorophenylacetate + NH4(+). In terms of biological role, nitrilase that hydrolyzes preferentially phenylacetonitrile, (R,S)-mandelonitrile, and 3-indolylacetonitrile. The protein is Arylacetonitrilase of Arthroderma benhamiae (strain ATCC MYA-4681 / CBS 112371) (Trichophyton mentagrophytes).